The primary structure comprises 423 residues: Zinc transporter ZIP13 (423 aa).

At 1–15 (MPGCPCPGIGMAGQR) the chain is on the lumenal side. Residues 16–36 (LLFLAALALELLGGAGGSQQA) form a helical membrane-spanning segment. At 37-68 (LRSRGVAAACRLDSKESESWGALLSGERLETW) the chain is on the cytoplasmic side. The helical transmembrane segment at 69–89 (ICSLLGSLMVGLSGVFPLLVI) threads the bilayer. The Lumenal segment spans residues 90 to 108 (PLEMGTTLRSEAGARRLKQ). A helical transmembrane segment spans residues 109–129 (LLSFALGGLLGNVFLHLLPEA). Residues 130 to 149 (WAYTNSASSGGERQSLQQQQ) lie on the Cytoplasmic side of the membrane. The helical transmembrane segment at 150-170 (QLGLWVIAGFLTFLVLEKLFF) threads the bilayer. Over 171–235 (DSKGKEETSQ…TIDNFTHGLA (65 aa)) the chain is Lumenal. Residues 236–256 (VAASFLVSKKIGLLTTMAILL) form a helical membrane-spanning segment. The XEXPHE-motif signature appears at 257 to 262 (HEIPHE). Residues 257 to 278 (HEIPHEVGDFAILLRAGFDRWS) lie on the Cytoplasmic side of the membrane. A helical membrane pass occupies residues 279–299 (AAKLQLSTALGGLLGACFAIC). The Lumenal portion of the chain corresponds to 300 to 368 (AQSPKGVGTG…RAPPPATEET (69 aa)). The helical transmembrane segment at 369-389 (VAWILPFTSGGFLYIALVNVL) threads the bilayer. Over 390–401 (PDLLEEDDPWRS) the chain is Cytoplasmic. The chain crosses the membrane as a helical span at residues 402–422 (LQQVLLLCAGIVVMVLFSVFV). Residue glutamate 423 is a topological domain, lumenal.

This sequence belongs to the ZIP transporter (TC 2.A.5) family. Homodimer.

The protein localises to the golgi apparatus membrane. It is found in the cytoplasmic vesicle membrane. It localises to the endoplasmic reticulum membrane. It catalyses the reaction Zn(2+)(in) = Zn(2+)(out). Functionally, functions as a zinc transporter transporting Zn(2+) from the Golgi apparatus to the cytosol and thus influences the zinc level at least in areas of the cytosol. May regulate beige adipocyte differentiation. The polypeptide is Zinc transporter ZIP13 (Bos taurus (Bovine)).